Reading from the N-terminus, the 104-residue chain is Transcription elongation factor A protein-like 9 (104 aa).

Residues 1 to 48 form a disordered region; it reads MKPCQKMEGNLEKEDEPKPEEEPKPEEKPEEGQEPEEEEKSEETFRER. The span at 9-31 shows a compositional bias: basic and acidic residues; sequence GNLEKEDEPKPEEEPKPEEKPEE. The segment covering 32–41 has biased composition (acidic residues); that stretch reads GQEPEEEEKS.

Belongs to the TFS-II family. TFA subfamily.

Its subcellular location is the nucleus. Its function is as follows. May be involved in transcriptional regulation. This Mus musculus (Mouse) protein is Transcription elongation factor A protein-like 9 (Tceal9).